Here is a 353-residue protein sequence, read N- to C-terminus: tRNA U34 carboxymethyltransferase (353 aa).

Carboxy-S-adenosyl-L-methionine is bound by residues K101, W119, K124, G144, 166–168 (DPS), 207–208 (LE), M227, Y231, and R346.

This sequence belongs to the class I-like SAM-binding methyltransferase superfamily. CmoB family. Homotetramer.

It catalyses the reaction carboxy-S-adenosyl-L-methionine + 5-hydroxyuridine(34) in tRNA = 5-carboxymethoxyuridine(34) in tRNA + S-adenosyl-L-homocysteine + H(+). Its function is as follows. Catalyzes carboxymethyl transfer from carboxy-S-adenosyl-L-methionine (Cx-SAM) to 5-hydroxyuridine (ho5U) to form 5-carboxymethoxyuridine (cmo5U) at position 34 in tRNAs. This chain is tRNA U34 carboxymethyltransferase, found in Psychrobacter sp. (strain PRwf-1).